Reading from the N-terminus, the 198-residue chain is Probable GTP-binding protein EngB (198 aa).

The EngB-type G domain maps to 22–197 (TLPEYAFIGR…LDYIEGINNS (176 aa)). GTP-binding positions include 30–37 (GRSNVGKS), 57–61 (GKTQL), 75–78 (DLPG), 142–145 (TKAD), and 175–178 (ITSA). Mg(2+) contacts are provided by Ser-37 and Thr-59.

This sequence belongs to the TRAFAC class TrmE-Era-EngA-EngB-Septin-like GTPase superfamily. EngB GTPase family. The cofactor is Mg(2+).

Necessary for normal cell division and for the maintenance of normal septation. In Christiangramia forsetii (strain DSM 17595 / CGMCC 1.15422 / KT0803) (Gramella forsetii), this protein is Probable GTP-binding protein EngB.